Here is a 623-residue protein sequence, read N- to C-terminus: Procollagen galactosyltransferase 1 (623 aa).

A signal peptide spans 1 to 30 (MAAAPRACKGHGRPLPVLLLLLLLALPPLG). Residues Asn-97, Asn-185, and Asn-382 are each glycosylated (N-linked (GlcNAc...) asparagine). Residues 589–607 (RAKSQKMREQQALSREAKN) are compositionally biased toward basic and acidic residues. Residues 589–623 (RAKSQKMREQQALSREAKNSDVLQSPLDSAARDEL) are disordered. The Prevents secretion from ER signature appears at 620–623 (RDEL).

The protein belongs to the glycosyltransferase 25 family. In terms of processing, N-glycosylated.

It localises to the endoplasmic reticulum lumen. The catalysed reaction is (5R)-5-hydroxy-L-lysyl-[collagen] + UDP-alpha-D-galactose = (5R)-5-O-(beta-D-galactosyl)-5-hydroxy-L-lysyl-[collagen] + UDP + H(+). In terms of biological role, beta-galactosyltransferase that transfers beta-galactose to hydroxylysine residues of type I collagen. By acting on collagen glycosylation, facilitates the formation of collagen triple helix. Also involved in the biosynthesis of collagen type IV. This chain is Procollagen galactosyltransferase 1 (COLGALT1), found in Bos taurus (Bovine).